The chain runs to 142 residues: Large ribosomal subunit protein uL13 (142 aa).

It belongs to the universal ribosomal protein uL13 family. Part of the 50S ribosomal subunit.

In terms of biological role, this protein is one of the early assembly proteins of the 50S ribosomal subunit, although it is not seen to bind rRNA by itself. It is important during the early stages of 50S assembly. The chain is Large ribosomal subunit protein uL13 from Psychrobacter arcticus (strain DSM 17307 / VKM B-2377 / 273-4).